Here is a 382-residue protein sequence, read N- to C-terminus: GDSL esterase/lipase At4g01130 (382 aa).

Residues 1–28 form the signal peptide; sequence MASDINRRRSFSLLVLIIVMLYGHKGDS. The Nucleophile role is filled by S41. N-linked (GlcNAc...) asparagine glycosylation is found at N118, N263, N275, and N330. Residues D348 and H351 contribute to the active site.

Belongs to the 'GDSL' lipolytic enzyme family.

It localises to the secreted. This chain is GDSL esterase/lipase At4g01130, found in Arabidopsis thaliana (Mouse-ear cress).